Reading from the N-terminus, the 156-residue chain is 6,7-dimethyl-8-ribityllumazine synthase (156 aa).

Residues F24, 58 to 60, and 82 to 84 contribute to the 5-amino-6-(D-ribitylamino)uracil site; these read AFE and VII. (2S)-2-hydroxy-3-oxobutyl phosphate is bound at residue 87-88; it reads ST. H90 (proton donor) is an active-site residue. Position 115 (F115) interacts with 5-amino-6-(D-ribitylamino)uracil. R129 serves as a coordination point for (2S)-2-hydroxy-3-oxobutyl phosphate.

It belongs to the DMRL synthase family.

The enzyme catalyses (2S)-2-hydroxy-3-oxobutyl phosphate + 5-amino-6-(D-ribitylamino)uracil = 6,7-dimethyl-8-(1-D-ribityl)lumazine + phosphate + 2 H2O + H(+). Its pathway is cofactor biosynthesis; riboflavin biosynthesis; riboflavin from 2-hydroxy-3-oxobutyl phosphate and 5-amino-6-(D-ribitylamino)uracil: step 1/2. Functionally, catalyzes the formation of 6,7-dimethyl-8-ribityllumazine by condensation of 5-amino-6-(D-ribitylamino)uracil with 3,4-dihydroxy-2-butanone 4-phosphate. This is the penultimate step in the biosynthesis of riboflavin. In Chlorobaculum parvum (strain DSM 263 / NCIMB 8327) (Chlorobium vibrioforme subsp. thiosulfatophilum), this protein is 6,7-dimethyl-8-ribityllumazine synthase.